Reading from the N-terminus, the 356-residue chain is Myricetin 7/4'-O-methyltransferase 2 (356 aa).

Asp222 lines the S-adenosyl-L-methionine pocket. His260 (proton acceptor) is an active-site residue.

The protein belongs to the class I-like SAM-binding methyltransferase superfamily. Cation-independent O-methyltransferase family. Homodimer.

The enzyme catalyses quercetin + S-adenosyl-L-methionine = rhamnetin + S-adenosyl-L-homocysteine + H(+). It carries out the reaction kaempferol + S-adenosyl-L-methionine = kaempferide + S-adenosyl-L-homocysteine + H(+). It catalyses the reaction myricetin + S-adenosyl-L-methionine = 7-O-methylmyricetin + S-adenosyl-L-homocysteine + H(+). The catalysed reaction is kaempferide + S-adenosyl-L-methionine = 7,4'-O-dimethylkaempferol + S-adenosyl-L-homocysteine + H(+). The enzyme catalyses isorhamnetin + S-adenosyl-L-methionine = 3',4'-O-dimethylquercetin + S-adenosyl-L-homocysteine + 2 H(+). It carries out the reaction 3',4',5,7-tetrahydroxy-3-methoxyflavone + S-adenosyl-L-methionine = 3',4',5-trihydroxy-3,7-dimethoxyflavone + S-adenosyl-L-homocysteine + H(+). It catalyses the reaction rhamnetin + S-adenosyl-L-methionine = 7,4'-O-dimethylquercetin + S-adenosyl-L-homocysteine + H(+). The catalysed reaction is syringetin + S-adenosyl-L-methionine = 7,3',5'-O-trimethylmyricetin + S-adenosyl-L-homocysteine + H(+). The enzyme catalyses 3',4',5'-O-trimethylmyricetin + S-adenosyl-L-methionine = 7,3',4',5'-O-tetramethylmyricetin + S-adenosyl-L-homocysteine. It participates in flavonoid metabolism. In terms of biological role, flavonoid 7/4'-O-methyltransferase involved in the biosynthesis of polymethoxylated flavonoids natural products such as myricetin derivatives, aroma compounds possessing antioxidant properties and exhibiting pharmacological activities such as anti-carcinogen, anti-viral, anti-thrombotic, anti-diabetic, anti-atherosclerotic, and anti-inflammatory effects. Catalyzes S-adenosylmethionine-dependent regioselective 7/4'-O-methylation of flavonoids; active on various hydroxylated flavonoid substrates. The chain is Myricetin 7/4'-O-methyltransferase 2 from Solanum lycopersicum (Tomato).